Consider the following 174-residue polypeptide: Disulfide bond formation protein B (174 aa).

At 1–17 (MSFQVVTGWLDNSPRRI) the chain is on the cytoplasmic side. Residues 18–34 (FAFVSLASIGMLAFGQY) form a helical membrane-spanning segment. Topologically, residues 35-52 (LQHVVGLEPCPMCIVQRY) are periplasmic. Cys-44 and Cys-47 are joined by a disulfide. A helical transmembrane segment spans residues 53–67 (ALVLVAIIAGLTGAS). The Cytoplasmic segment spans residues 68–74 (GRKGLHL). The helical transmembrane segment at 75–92 (GGAVLMLGSSGFGAYVAA) threads the bilayer. At 93–148 (RQSWLQWYPPEVVSCGRDFYGMIETFPLQRAIPMIFKGSGDCSKVDWTFLGGSIAN) the chain is on the periplasmic side. An intrachain disulfide couples Cys-107 to Cys-134. The helical transmembrane segment at 149–167 (WTFVVFGLIVLLSLALIWR) threads the bilayer. Over 168 to 174 (RVSRRVS) the chain is Cytoplasmic.

This sequence belongs to the DsbB family.

Its subcellular location is the cell inner membrane. Functionally, required for disulfide bond formation in some periplasmic proteins. Acts by oxidizing the DsbA protein. The chain is Disulfide bond formation protein B from Albidiferax ferrireducens (strain ATCC BAA-621 / DSM 15236 / T118) (Rhodoferax ferrireducens).